Here is a 434-residue protein sequence, read N- to C-terminus: Glycylpeptide N-tetradecanoyltransferase 1 (434 aa).

A disordered region spans residues 1-24 (MADNNSPPGSVEQKADQIVEANPL). The residue at position 2 (alanine 2) is an N-acetylalanine. Tetradecanoyl-CoA-binding positions include 48-51 (HKFW), 184-186 (LCV), and 192-196 (SKRLA). The active-site Proton acceptor; via carboxylate is leucine 434.

This sequence belongs to the NMT family. In terms of tissue distribution, expressed ubiquitously, with higher levels in young tissues (at protein level).

Its subcellular location is the cytoplasm. It carries out the reaction N-terminal glycyl-[protein] + tetradecanoyl-CoA = N-tetradecanoylglycyl-[protein] + CoA + H(+). Adds a myristoyl group to the N-terminal glycine residue of certain cellular proteins. Can also use decanoyl-CoA and lauroyl-CoA as substrates. The chain is Glycylpeptide N-tetradecanoyltransferase 1 (NMT1) from Arabidopsis thaliana (Mouse-ear cress).